A 251-amino-acid chain; its full sequence is UPF0309 protein SAV_3856 (251 aa).

Positions 36–220 constitute an SIS domain; it reads IADTVADGGR…AGTLADRGIE (185 aa).

It belongs to the UPF0309 family.

The sequence is that of UPF0309 protein SAV_3856 from Streptomyces avermitilis (strain ATCC 31267 / DSM 46492 / JCM 5070 / NBRC 14893 / NCIMB 12804 / NRRL 8165 / MA-4680).